Reading from the N-terminus, the 176-residue chain is 3-hydroxyanthranilate 3,4-dioxygenase (176 aa).

Arginine 44 serves as a coordination point for O2. Fe cation is bound by residues histidine 48, glutamate 54, and histidine 92. Residue glutamate 54 coordinates substrate. Substrate-binding residues include arginine 96 and glutamate 106. Fe cation contacts are provided by cysteine 121, cysteine 124, cysteine 158, and cysteine 161.

It belongs to the 3-HAO family. In terms of assembly, homodimer. The cofactor is Fe(2+).

The catalysed reaction is 3-hydroxyanthranilate + O2 = (2Z,4Z)-2-amino-3-carboxymuconate 6-semialdehyde. It participates in cofactor biosynthesis; NAD(+) biosynthesis; quinolinate from L-kynurenine: step 3/3. In terms of biological role, catalyzes the oxidative ring opening of 3-hydroxyanthranilate to 2-amino-3-carboxymuconate semialdehyde, which spontaneously cyclizes to quinolinate. The protein is 3-hydroxyanthranilate 3,4-dioxygenase of Xanthomonas campestris pv. campestris (strain B100).